Reading from the N-terminus, the 165-residue chain is Large ribosomal subunit protein uL10 (165 aa).

The protein belongs to the universal ribosomal protein uL10 family. In terms of assembly, part of the ribosomal stalk of the 50S ribosomal subunit. The N-terminus interacts with L11 and the large rRNA to form the base of the stalk. The C-terminus forms an elongated spine to which L12 dimers bind in a sequential fashion forming a multimeric L10(L12)X complex.

In terms of biological role, forms part of the ribosomal stalk, playing a central role in the interaction of the ribosome with GTP-bound translation factors. This Serratia proteamaculans (strain 568) protein is Large ribosomal subunit protein uL10.